Reading from the N-terminus, the 37-residue chain is Large ribosomal subunit protein bL36c (37 aa).

It belongs to the bacterial ribosomal protein bL36 family.

The protein resides in the plastid. It localises to the chloroplast. This is Large ribosomal subunit protein bL36c from Coffea arabica (Arabian coffee).